The sequence spans 397 residues: LIM/homeobox protein Lhx9 (397 aa).

LIM zinc-binding domains are found at residues 69–130 (ALCA…RFSV) and 131–193 (QRCA…LLQG). Disordered stretches follow at residues 248-272 (ENEA…RMRT) and 330-364 (ENGG…TLTD). The homeobox DNA-binding region spans 267-326 (TKRMRTSFKHHQLRTMKSYFAINHNPDAKDLKQLAQKTGLTKRVLQVWFQNARAKFRRNL).

As to quaternary structure, interacts with LDB1 and LDB2.

The protein resides in the nucleus. Functionally, involved in gonadal development. This is LIM/homeobox protein Lhx9 (LHX9) from Bos taurus (Bovine).